A 521-amino-acid chain; its full sequence is Protein nucleotidyltransferase YdiU (521 aa).

Gly109, Gly111, Arg112, Lys131, Asp143, Gly144, Arg194, and Arg201 together coordinate ATP. The active-site Proton acceptor is Asp270. Mg(2+)-binding residues include Asn271 and Asp280. Asp280 is an ATP binding site.

The protein belongs to the SELO family. It depends on Mg(2+) as a cofactor. The cofactor is Mn(2+).

The enzyme catalyses L-seryl-[protein] + ATP = 3-O-(5'-adenylyl)-L-seryl-[protein] + diphosphate. It catalyses the reaction L-threonyl-[protein] + ATP = 3-O-(5'-adenylyl)-L-threonyl-[protein] + diphosphate. The catalysed reaction is L-tyrosyl-[protein] + ATP = O-(5'-adenylyl)-L-tyrosyl-[protein] + diphosphate. It carries out the reaction L-histidyl-[protein] + UTP = N(tele)-(5'-uridylyl)-L-histidyl-[protein] + diphosphate. The enzyme catalyses L-seryl-[protein] + UTP = O-(5'-uridylyl)-L-seryl-[protein] + diphosphate. It catalyses the reaction L-tyrosyl-[protein] + UTP = O-(5'-uridylyl)-L-tyrosyl-[protein] + diphosphate. Functionally, nucleotidyltransferase involved in the post-translational modification of proteins. It can catalyze the addition of adenosine monophosphate (AMP) or uridine monophosphate (UMP) to a protein, resulting in modifications known as AMPylation and UMPylation. In Burkholderia pseudomallei (strain K96243), this protein is Protein nucleotidyltransferase YdiU.